Reading from the N-terminus, the 122-residue chain is Large ribosomal subunit protein uL14 (122 aa).

This sequence belongs to the universal ribosomal protein uL14 family. In terms of assembly, part of the 50S ribosomal subunit. Forms a cluster with proteins L3 and L19. In the 70S ribosome, L14 and L19 interact and together make contacts with the 16S rRNA in bridges B5 and B8.

Its function is as follows. Binds to 23S rRNA. Forms part of two intersubunit bridges in the 70S ribosome. In Rhodococcus erythropolis (strain PR4 / NBRC 100887), this protein is Large ribosomal subunit protein uL14.